Here is a 476-residue protein sequence, read N- to C-terminus: Aspartyl/glutamyl-tRNA(Asn/Gln) amidotransferase subunit B (476 aa).

The protein belongs to the GatB/GatE family. GatB subfamily. As to quaternary structure, heterotrimer of A, B and C subunits.

It carries out the reaction L-glutamyl-tRNA(Gln) + L-glutamine + ATP + H2O = L-glutaminyl-tRNA(Gln) + L-glutamate + ADP + phosphate + H(+). The enzyme catalyses L-aspartyl-tRNA(Asn) + L-glutamine + ATP + H2O = L-asparaginyl-tRNA(Asn) + L-glutamate + ADP + phosphate + 2 H(+). In terms of biological role, allows the formation of correctly charged Asn-tRNA(Asn) or Gln-tRNA(Gln) through the transamidation of misacylated Asp-tRNA(Asn) or Glu-tRNA(Gln) in organisms which lack either or both of asparaginyl-tRNA or glutaminyl-tRNA synthetases. The reaction takes place in the presence of glutamine and ATP through an activated phospho-Asp-tRNA(Asn) or phospho-Glu-tRNA(Gln). The chain is Aspartyl/glutamyl-tRNA(Asn/Gln) amidotransferase subunit B from Vesicomyosocius okutanii subsp. Calyptogena okutanii (strain HA).